The sequence spans 329 residues: BTB/POZ domain-containing adapter for CUL3-mediated RhoA degradation protein 1 (329 aa).

Over residues 1–15 (MSAEASGPAAAEAPS) the composition is skewed to low complexity. The interval 1 to 21 (MSAEASGPAAAEAPSLEVAKP) is disordered. The 69-residue stretch at 41–109 (KYVKLNVGGS…LRDGSVPLPE (69 aa)) folds into the BTB domain. The tract at residues 280–302 (LEATGGAAGGGGASRGEDEDNRE) is disordered.

This sequence belongs to the BACURD family. Homotetramer; forms a two-fold symmetric tetramer in solution. Interacts with CUL3; interaction is direct and forms a 5:5 heterodecamer. Component of the BCR(KCTD13) E3 ubiquitin ligase complex, at least composed of CUL3, KCTD13/BACURD1 and RBX1. Interacts with RHOA; with a preference for RhoA-GDP. Interacts with POLD2 and PCNA. Interacts with SPRTN.

It is found in the nucleus. Its pathway is protein modification; protein ubiquitination. Functionally, substrate-specific adapter of a BCR (BTB-CUL3-RBX1) E3 ubiquitin-protein ligase complex required for synaptic transmission. The BCR(KCTD13) E3 ubiquitin ligase complex mediates the ubiquitination of RHOA, leading to its degradation by the proteasome, thereby regulating the actin cytoskeleton and promoting synaptic transmission. The sequence is that of BTB/POZ domain-containing adapter for CUL3-mediated RhoA degradation protein 1 (KCTD13) from Bos taurus (Bovine).